Here is a 172-residue protein sequence, read N- to C-terminus: GTP-dependent dephospho-CoA kinase (172 aa).

The GTP site is built by Asp-49, Val-50, Val-51, Asp-68, Lys-70, and Glu-120.

Belongs to the GTP-dependent DPCK family.

It catalyses the reaction 3'-dephospho-CoA + GTP = GDP + CoA + H(+). It functions in the pathway cofactor biosynthesis; coenzyme A biosynthesis. Catalyzes the GTP-dependent phosphorylation of the 3'-hydroxyl group of dephosphocoenzyme A to form coenzyme A (CoA). In Pyrobaculum arsenaticum (strain DSM 13514 / JCM 11321 / PZ6), this protein is GTP-dependent dephospho-CoA kinase.